A 40-amino-acid polypeptide reads, in one-letter code: Photosystem II reaction center protein X (40 aa).

At 1–11 (TITPSLKGFFI) the chain is on the lumenal side. A helical transmembrane segment spans residues 12-28 (GLLSGAVVLGLTFAVLI). Residues 29–40 (AISQIDKVQRSL) lie on the Cytoplasmic side of the membrane.

It belongs to the PsbX family. Type 1 subfamily. PSII is composed of 1 copy each of membrane proteins PsbA, PsbB, PsbC, PsbD, PsbE, PsbF, PsbH, PsbI, PsbJ, PsbK, PsbL, PsbM, PsbT, PsbX, PsbY, PsbZ, Psb30/Ycf12, peripheral proteins PsbO, CyanoQ (PsbQ), PsbU, PsbV and a large number of cofactors. It forms dimeric complexes. PSII binds multiple chlorophylls, carotenoids and specific lipids. serves as cofactor.

The protein resides in the cellular thylakoid membrane. Functionally, involved in the binding and/or turnover of quinones at the Q(B) site of photosystem II (PSII). PSII is a light-driven water plastoquinone oxidoreductase, using light energy to abstract electrons from H(2)O, generating a proton gradient subsequently used for ATP formation. The sequence is that of Photosystem II reaction center protein X from Thermostichus vulcanus (Synechococcus vulcanus).